A 410-amino-acid chain; its full sequence is Mating-type locus allele B3 protein (410 aa).

Positions 1-110 (MSRDPKLSLS…ANVVSPGEGC (110 aa)) are variable domain between B alleles. The segment at residues 107-184 (GEGCRNLSED…NARRRSGWSH (78 aa)) is a DNA-binding region (homeobox; TALE-type). Residues 111-410 (RNLSEDLPAY…PFLCLSVAFV (300 aa)) form a highly conserved between B alleles region. 2 disordered regions span residues 203 to 224 (AKLS…PSDD) and 278 to 335 (TPKP…TPEL). Residues 205 to 219 (LSSSNQSTPPSLTSE) are compositionally biased toward polar residues. Residues 276–308 (KKTPKPGMPRPVTTVAKRHPARKTKPAAKPKSR) carry the Nuclear localization signal motif. Basic residues predominate over residues 291–307 (AKRHPARKTKPAAKPKS). Over residues 312-335 (PRASTTPSIDSTLDSSKLESTPEL) the composition is skewed to polar residues. Positions 333 to 410 (PELSMCSTAD…PFLCLSVAFV (78 aa)) are not essential for B3 function.

The protein belongs to the TALE/M-ATYP homeobox family.

The protein localises to the nucleus. The B locus has at least 25 alleles, and any combination of two different B alleles yields a multimeric regulatory protein, that activates genes responsible for the pathogenicity and for the sexual development of the fungus within the corn plant. The polypeptide is Mating-type locus allele B3 protein (Mycosarcoma maydis (Corn smut fungus)).